Here is a 745-residue protein sequence, read N- to C-terminus: MSFPGWGPYPPVERDETSAITYSSKLHGSVTVRDPYSQLEVPFEDSEETKAFVHSQRKFARTYLDENPDREAWLETLKKSWNYRRFSALKPESDGHYYFEYNDGLQSQLSLYRVRMGEEDTVLTESGPGGELFFNPNLLSLDGNAALTGFVMSPCGNYWAYGVSEHGSDWMSIYVRKTSSPHLPSQERGKDPGRMNDKIRHVRFFIVSWTSDSKGFFYSRYPPEDDEGKGNAPAMNCMVYYHRIGEDQESDVLVHEDPEHPFWISSVQLTPSGRYILFAASRDASHTQLVKIADLHENDIGTNMKWKNLHDPWEARFTIVGDEGSKIYFMTNLKAKNYKVATFDANHPDEGLTTLIAEDPNAFLVSASIHAQDKLLLVYLRNASHEIHIRDLTTGKPLGRIFEDLLGQFMVSGRRQDNDIFVLFSSFLSPGTVYRYTFGEEKGHSSLFRAISIPGLNLDDFMTESVFYPSKDGTSVHMFITRPKDVLLDGTSPVLQYGYGGFSLAMLPTFSLSTLLFCKIYRAIYAIPNIRGGSEYGESWHREGMLDKKQNVFDDFNAATEWLIANKYASKDRIAIRGGSNGGVLTTACANQAPGLYRCVITIEGIIDMLRFPKFTFGASWRSEYGDPEDPEDFDFIFKYSPYHNIPPPGDTIMPAMLFFTAAYDDRVSPLHTFKHVAALQHNFPKGPNPCLMRIDLNSGHFAGKSTQEMLEETADEYSFIGKSMGLTMQTQGSVDSSRWSCVTV.

Active-site charge relay system residues include Ser580, Asp665, and His701.

Belongs to the peptidase S9A family. As to quaternary structure, monomer.

It catalyses the reaction Hydrolysis of Pro-|-Xaa &gt;&gt; Ala-|-Xaa in oligopeptides.. It functions in the pathway mycotoxin biosynthesis. Its function is as follows. Prolyl oligopeptidase; part of the gene cluster that mediates the biosynthesis of omphalotin A, a highly methylated cyclic dodecapeptide with nematodicidal activity. Excises and catalyzes the macrocyclization of the methylated core peptide of OphMA to yield omphalotin A. OphP works in a two-step fashion with an initial cleavage at the N-terminus, followed by a second cleavage at the C-terminus of the core peptide. According to this mechanism, the free N-terminus of the core peptide, generated by the first cleavage, attacks the covalent intermediate of the second cleavage, which results in macrocyclization of the core peptide. The polypeptide is Prolyl oligopeptidase ophP (Omphalotus olearius (Jack o'lantern)).